A 358-amino-acid chain; its full sequence is Peptide chain release factor 1 (358 aa).

Position 237 is an N5-methylglutamine (Q237).

The protein belongs to the prokaryotic/mitochondrial release factor family. Methylated by PrmC. Methylation increases the termination efficiency of RF1.

The protein localises to the cytoplasm. Functionally, peptide chain release factor 1 directs the termination of translation in response to the peptide chain termination codons UAG and UAA. This is Peptide chain release factor 1 from Streptomyces griseus subsp. griseus (strain JCM 4626 / CBS 651.72 / NBRC 13350 / KCC S-0626 / ISP 5235).